A 495-amino-acid chain; its full sequence is Angiopoietin-2 (495 aa).

Residues 1 to 18 (MWQIVFFTLSCDLVRAAA) form the signal peptide. N-linked (GlcNAc...) asparagine glycans are attached at residues N88, N118, N132, N150, N239, and N303. Residues 165–247 (STNKLEKQIL…VNNSVLQKQQ (83 aa)) adopt a coiled-coil conformation. A Fibrinogen C-terminal domain is found at 274-494 (KEEQIIYRDC…GTTMMIRPAD (221 aa)). C283 and C312 are oxidised to a cystine. 4 residues coordinate Ca(2+): D428, D430, C432, and C434. Cystine bridges form between C432–C434 and C436–C449.

As to quaternary structure, interacts with TEK/TIE2, competing for the same binding site as ANGPT1. Interacts with ITGA5. Interacts with SVEP1/polydom. Interacts with THBD; this interaction significantly inhibits the generation of activated PC and TAFIa/CPB2 by the thrombin/thrombomodulin complex.

The protein resides in the secreted. Functionally, binds to TEK/TIE2, competing for the ANGPT1 binding site, and modulating ANGPT1 signaling. Can induce tyrosine phosphorylation of TEK/TIE2 in the absence of ANGPT1. In the absence of angiogenic inducers, such as VEGF, ANGPT2-mediated loosening of cell-matrix contacts may induce endothelial cell apoptosis with consequent vascular regression. In concert with VEGF, it may facilitate endothelial cell migration and proliferation, thus serving as a permissive angiogenic signal. Involved in the regulation of lymphangiogenesis. The protein is Angiopoietin-2 (ANGPT2) of Canis lupus familiaris (Dog).